Reading from the N-terminus, the 495-residue chain is Serine/threonine-protein phosphatase 2A regulatory subunit sur-6 (495 aa).

The disordered stretch occupies residues 1 to 27 (MVMEVDEPAVAATTSQNQPQEHANDFD). Over residues 12 to 21 (ATTSQNQPQE) the composition is skewed to polar residues. 6 WD repeats span residues 64 to 103 (TEADVISCVEFSHDGEYLATGDKGGRVVIFQRDQSGKYVK), 130 to 171 (EIDE…RKIG), 215 to 253 (AHTYHVNSISVNSDQETFLSADDLRVNLWNLEITNESFN), 264 to 304 (ELTE…LCDA), 323 to 361 (EIIASVSDVKFSHNGRYLLTRDYLTVKVWDLNMESQPVE), and 378 to 419 (ENDS…DAKT). The interval 439–459 (SAKRKRNNLSSSGETTEEDLS) is disordered. The stretch at 464-495 (QFDRKILHTAWHPKDNIIALAATNNLYIFSDV) is one WD 7 repeat.

This sequence belongs to the phosphatase 2A regulatory subunit B family. As to quaternary structure, part of a complex consisting of a common heterodimeric core enzyme, composed of catalytic subunit let-92 and constant regulatory subunit paa-1, that associates with a variety of regulatory subunits which confer distinct properties to the holoenzyme. Interacts with let-92.

The protein resides in the cytoplasm. Functionally, probable regulatory subunit of serine/threonine phosphatase let-92. Together with let-92 and constant regulatory subunit paa-1, positively regulates centriole duplication during early embryonic cell divisions by preventing the degradation of sas-5 and kinase zyg-1. In addition, during vulva development, may play a role with phosphatase let-92 and regulatory subunit paa-1 in the induction of vulva cell precursors by positively regulating let-60/Ras-MAP kinase signaling, probably by promoting lin-45 activation. In intestinal epithelial cells, may play a role in the late secretory pathway probably by regulating the exocyst, a protein complex involved in targeting secretory vesicles to the plasma membrane. This chain is Serine/threonine-protein phosphatase 2A regulatory subunit sur-6, found in Caenorhabditis elegans.